The primary structure comprises 519 residues: Importin subunit alpha-5 (519 aa).

An IBB domain is found at 1–58; that stretch reads MSLRPSTKTEIRRIRYKVSVDAEEGRRRREDFLVEIRKSKRNENLMKKRRVKVLPPDY. ARM repeat units follow at residues 103–143, 146–185, 188–228, 230–269, 272–311, 314–354, 357–396, and 400–439; these read SPPT…NIAS, SEHTKVVIDHGVVPLFVQLLASPDDDVREQAIWGLGNVAG, IQCR…NFFR, KPSPPFDLVKHVLPVLKRLVYSDDEQVLIDACWALSNLSD, NENIQSVIEAGVVPRLVELLQHASPVVLVPALRCIGNIVS, SQQT…NITA, EEQIQSVIDANLIPSLVNLAQHAEFDIKKEAIWAISNASV, and PNQIKYLVEQNCIKALCDILVCPDLRIILVSLGGLEMILI.

This sequence belongs to the importin alpha family. In terms of assembly, forms a complex with importin subunit beta-1.

The protein resides in the nucleus envelope. Functionally, binds to conventional NLS motifs and mediates nuclear protein import across the nuclear envelope. This chain is Importin subunit alpha-5, found in Arabidopsis thaliana (Mouse-ear cress).